A 124-amino-acid chain; its full sequence is Fluoride-specific ion channel FluC (124 aa).

Helical transmembrane passes span 4–24 (FLAV…LGLW), 34–54 (LGTL…LAWF), 67–87 (FVIT…AEVV), and 100–120 (LIAF…FYSL). Na(+) contacts are provided by glycine 74 and threonine 77.

It belongs to the fluoride channel Fluc/FEX (TC 1.A.43) family.

It localises to the cell inner membrane. The enzyme catalyses fluoride(in) = fluoride(out). Its activity is regulated as follows. Na(+) is not transported, but it plays an essential structural role and its presence is essential for fluoride channel function. Its function is as follows. Fluoride-specific ion channel. Important for reducing fluoride concentration in the cell, thus reducing its toxicity. The sequence is that of Fluoride-specific ion channel FluC from Thiobacillus denitrificans (strain ATCC 25259 / T1).